The chain runs to 649 residues: Forkhead box protein O1 (649 aa).

2 disordered regions span residues Met1–Ser62 and Val112–Arg151. A Phosphothreonine; by PKB/AKT1 or PKB/AKT2 and SGK1 modification is found at Thr24. Residues Asn33–Ser62 show a composition bias toward low complexity. Residues Pro116–Ala135 show a composition bias toward pro residues. Residues Trp154 to Ala248 constitute a DNA-binding region (fork-head). DNA-binding stretches follow at residues Asn205–Ser212 and Ser228–Trp231. Phosphoserine; by STK4/MST1 is present on Ser206. A phosphoserine mark is found at Ser212, Ser228, and Ser229. The tract at residues Ser228–Ser339 is disordered. Lys239 and Lys242 each carry N6-acetyllysine. The residue at position 243 (Ser243) is a Phosphoserine; by CDK1. Omega-N-methylarginine; by PRMT1 is present on residues Arg245 and Arg247. The short motif at Arg245–Arg247 is the Nuclear localization signal element. Ser250 carries the post-translational modification Phosphoserine; by PKB/AKT1 and SGK1. N6-acetyllysine is present on residues Lys256, Lys259, and Lys268. The span at Ala258 to Ala269 shows a compositional bias: basic residues. The segment at Gly277–Gln557 is sufficient for interaction with NLK. Phosphoserine occurs at positions 281 and 292. A compositionally biased stretch (polar residues) spans Asn303 to Gly320. Residue Ser313 is modified to Phosphoserine; by PKB/AKT1. Ser316 is subject to Phosphoserine; by CK1 and SGK1. Residue Ser319 is modified to Phosphoserine; by CK1. Ser323 is subject to Phosphoserine. Thr327 bears the Phosphothreonine mark. Residues Ser357 to Pro453 form a required for interaction with RUNX2 region. An N6-acetyllysine modification is found at Lys417. Positions Leu456 to Leu460 match the Required for interaction with SIRT1 motif.

As to quaternary structure, interacts with LRPPRC. Interacts with RUNX2; the interaction inhibits RUNX2 transcriptional activity and mediates the IGF1/insulin-dependent BGLAP expression in osteoblasts Interacts with PPP2R1A; the interaction regulates the dephosphorylation of FOXO1 at Thr-24 and Ser-250 leading to its nuclear import. Interacts with NLK. Interacts with SIRT1; the interaction results in the deacetylation of FOXO1 leading to activation of FOXO1-mediated transcription of genes involved in DNA repair and stress resistance. Binds to CDK1. Interacts with the 14-3-3 proteins, YWHAG and YWHAZ; the interactions require insulin-stimulated phosphorylation on Thr-24, promote nuclear exit and loss of transcriptional activity. Interacts with SKP2; the interaction ubiquitinates FOXO1 leading to its proteasomal degradation. The interaction requires the presence of KRIT1. Interacts (via the C-terminal half) with ATF4 (via its DNA binding domain); the interaction occurs in osteoblasts, regulates glucose homeostasis via suppression of beta-cell proliferation and subsequent decrease in insulin production. Interacts with PRMT1; the interaction methylates FOXO1, prevents PKB/AKT1 phosphorylation and retains FOXO1 in the nucleus. Interacts with EP300 and CREBBP; the interactions acetylate FOXO1. Interacts with SIRT2; the interaction is disrupted in response to oxidative stress or serum deprivation, leading to increased level of acetylated FOXO1, which promotes stress-induced autophagy by stimulating E1-like activating enzyme ATG7. Interacts (acetylated form) with ATG7; the interaction is increased in response to oxidative stress or serum deprivation and promotes the autophagic process leading to cell death. Interacts (acetylated form) with PPARG. Interacts with XBP1; this interaction is direct and leads to FOXO1 ubiquitination and degradation via the proteasome pathway. Interacts (via the Fork-head domain) with CEBPA; the interaction increases when FOXO1 is deacetylated. Interacts with WDFY2. Forms a complex with WDFY2 and AKT1. Interacts with CRY1. Interacts with PPIA/CYPA; the interaction promotes FOXO1 dephosphorylation, nuclear accumulation and transcriptional activity. Interacts with TOX4; FOXO1 is required for full induction of TOX4-dependent activity and the interaction is inhibited by insulin. Interacts (when phosphorylated on Ser-250) with STUB1/CHIP. Phosphorylation by NLK promotes nuclear export and inhibits the transcriptional activity. In response to growth factors, phosphorylation on Thr-24, Ser-250 and Ser-313 by PKB/AKT1 promotes nuclear export and inactivation of transactivational activity. Phosphorylation on Thr-24 is required for binding 14-3-3 proteins. Phosphorylation of Ser-250 decreases DNA-binding activity and promotes the phosphorylation of Thr-24 and Ser-313, permitting phosphorylation of Ser-316 and Ser-319, probably by CDK1, leading to nuclear exclusion and loss of function. Stress signals, such as response to oxygen or nitric oxide, attenuate the PKB/AKT1-mediated phosphorylation leading to nuclear retention. Phosphorylation of Ser-323 is independent of IGF1 and leads to reduced function. Dephosphorylated on Thr-24 and Ser-250 by PP2A in beta-cells under oxidative stress leading to nuclear retention. Phosphorylation of Ser-243 by CDK1 disrupts binding of 14-3-3 proteins leading to nuclear accumulation and has no effect on DNA binding nor transcriptional activity. Phosphorylation by STK4/MST1 on Ser-206, upon oxidative stress, inhibits binding to 14-3-3 proteins and nuclear export. PPIA/CYPA promotes its dephosphorylation on Ser-250. Post-translationally, ubiquitinated by SKP2. Ubiquitination leads to proteasomal degradation. Ubiquitinated by STUB1/CHIP; when Ser-250 is phosphorylated. In terms of processing, methylation inhibits AKT1-mediated phosphorylation at Ser-250 and is increased by oxidative stress. Acetylated. Acetylation at Lys-256 and Lys-268 are necessary for autophagic cell death induction. Deacetylated by SIRT2 in response to oxidative stress or serum deprivation, thereby negatively regulating FOXO1-mediated autophagic cell death. Once in the nucleus, acetylated by CREBBP/EP300. Acetylation diminishes the interaction with target DNA and attenuates the transcriptional activity. It increases the phosphorylation at Ser-250. Deacetylation by SIRT1 results in reactivation of the transcriptional activity. Oxidative stress by hydrogen peroxide treatment appears to promote deacetylation and uncoupling of insulin-induced phosphorylation. By contrast, resveratrol acts independently of acetylation. Acetylated at Lys-417, promoting its localization to the nucleus and transcription factor activity. Deacetylation at Lys-417 by SIRT6, promotes its translocation into the cytoplasm, preventing its transcription factor activity. Deacetylation and subsequent inhibition by SIRT6 has different effects depending on cell types: it inhibits gluconeogenesis in hepatocytes, promotes glucose sensing in pancreatic beta-cells and regulates lipid catabolism in brown adipocytes. Expressed in the internal elastic lamina of the carotid artery (at protein level).

Its subcellular location is the cytoplasm. The protein localises to the nucleus. In terms of biological role, transcription factor that is the main target of insulin signaling and regulates metabolic homeostasis in response to oxidative stress. Binds to the insulin response element (IRE) with consensus sequence 5'-TT[G/A]TTTTG-3' and the related Daf-16 family binding element (DBE) with consensus sequence 5'-TT[G/A]TTTAC-3'. Activity suppressed by insulin. Main regulator of redox balance and osteoblast numbers and controls bone mass. Orchestrates the endocrine function of the skeleton in regulating glucose metabolism. Also acts as a key regulator of chondrogenic commitment of skeletal progenitor cells in response to lipid availability: when lipids levels are low, translocates to the nucleus and promotes expression of SOX9, which induces chondrogenic commitment and suppresses fatty acid oxidation. Acts synergistically with ATF4 to suppress osteocalcin/BGLAP activity, increasing glucose levels and triggering glucose intolerance and insulin insensitivity. Also suppresses the transcriptional activity of RUNX2, an upstream activator of osteocalcin/BGLAP. Acts as an inhibitor of glucose sensing in pancreatic beta cells by acting as a transcription repressor and suppressing expression of PDX1. In hepatocytes, promotes gluconeogenesis by acting together with PPARGC1A and CEBPA to activate the expression of genes such as IGFBP1, G6PC1 and PCK1. Also promotes gluconeogenesis by directly promoting expression of PPARGC1A and G6PC1. Important regulator of cell death acting downstream of CDK1, PKB/AKT1 and STK4/MST1. Promotes neural cell death. Mediates insulin action on adipose tissue. Regulates the expression of adipogenic genes such as PPARG during preadipocyte differentiation and, adipocyte size and adipose tissue-specific gene expression in response to excessive calorie intake. Regulates the transcriptional activity of GADD45A and repair of nitric oxide-damaged DNA in beta-cells. Required for the autophagic cell death induction in response to starvation or oxidative stress in a transcription-independent manner. Mediates the function of MLIP in cardiomyocytes hypertrophy and cardiac remodeling. Positive regulator of apoptosis in cardiac smooth muscle cells as a result of its transcriptional activation of pro-apoptotic genes. Regulates endothelial cell (EC) viability and apoptosis in a PPIA/CYPA-dependent manner via transcription of CCL2 and BCL2L11 which are involved in EC chemotaxis and apoptosis. The protein is Forkhead box protein O1 (Foxo1) of Rattus norvegicus (Rat).